The following is a 948-amino-acid chain: Protein translocase subunit SecA (948 aa).

ATP contacts are provided by residues Gln90, 108-112 (GEGKT), and Asp509.

The protein belongs to the SecA family. In terms of assembly, monomer and homodimer. Part of the essential Sec protein translocation apparatus which comprises SecA, SecYEG and auxiliary proteins SecDF. Other proteins may also be involved.

It localises to the cell inner membrane. The protein resides in the cellular thylakoid membrane. It is found in the cytoplasm. The enzyme catalyses ATP + H2O + cellular proteinSide 1 = ADP + phosphate + cellular proteinSide 2.. Its function is as follows. Part of the Sec protein translocase complex. Interacts with the SecYEG preprotein conducting channel. Has a central role in coupling the hydrolysis of ATP to the transfer of proteins into and across the cell membrane, serving as an ATP-driven molecular motor driving the stepwise translocation of polypeptide chains across the membrane. Probably participates in protein translocation into and across both the cytoplasmic and thylakoid membranes in cyanobacterial cells. In Prochlorococcus marinus (strain MIT 9313), this protein is Protein translocase subunit SecA.